The primary structure comprises 348 residues: Rhodopsin (348 aa).

Met-1 carries the N-acetylmethionine modification. Over 1–36 (MNGTEGPNFYVPFSNKTGVVRSPFEFPQYYLAEPWQ) the chain is Extracellular. N-linked (GlcNAc...) asparagine glycans are attached at residues Asn-2 and Asn-15. Residues 37-61 (FSMLAAYMFLLIVLGFPINFLTLYV) traverse the membrane as a helical segment. At 62–73 (TVQHKKLRTPLN) the chain is on the cytoplasmic side. A helical transmembrane segment spans residues 74–96 (YILLNLAVADLFMVFGGFTTTLY). Over 97–110 (TSLHGYFVFGPTGC) the chain is Extracellular. Residues Cys-110 and Cys-187 are joined by a disulfide bond. Residues 111-133 (NLEGFFATLGGEIALWSLVVLAI) form a helical membrane-spanning segment. The short motif at 134–136 (ERY) is the 'Ionic lock' involved in activated form stabilization element. Over 134 to 152 (ERYVVVCKPMSNFRFGENH) the chain is Cytoplasmic. The chain crosses the membrane as a helical span at residues 153 to 173 (AIMGVGFTWVMALACAAPPLV). At 174-202 (GWSRYIPEGMQCSCGIDYYTLKPEVNNES) the chain is on the extracellular side. Residue Glu-201 participates in Zn(2+) binding. The chain crosses the membrane as a helical span at residues 203-224 (FVIYMFVVHFTIPMIVIFFCYG). Residues 225-252 (QLVFTVKEAAAQQQESATTQKAEKEVTR) lie on the Cytoplasmic side of the membrane. Residues 253-274 (MVIIMVIAFLICWVPYASVAFY) form a helical membrane-spanning segment. The Extracellular segment spans residues 275–286 (IFTHQGSNFGPI). A Zn(2+)-binding site is contributed by Gln-279. The chain crosses the membrane as a helical span at residues 287–308 (FMTLPAFFAKAASIYNPVIYIM). The residue at position 296 (Lys-296) is an N6-(retinylidene)lysine. The Cytoplasmic portion of the chain corresponds to 309–348 (MNKQFRTCMITTLCCGKNPLGDDEVSASASKTETSQVAPA). Residues Cys-322 and Cys-323 are each lipidated (S-palmitoyl cysteine). The segment at 330-348 (DDEVSASASKTETSQVAPA) is interaction with SAG. A phosphoserine mark is found at Ser-334 and Ser-338. Phosphothreonine occurs at positions 340 and 342. Phosphoserine is present on Ser-343.

It belongs to the G-protein coupled receptor 1 family. Opsin subfamily. Homodimer. May form a complex composed of RHO, GRK1 and RCVRN in a Ca(2+)-dependent manner; RCVRN prevents the interaction between GRK1 and RHO. Interacts with GRK1. Interacts (phosphorylated form) with SAG. Interacts with GNAT1. Interacts with GNAT3. SAG and G-proteins compete for a common binding site. Interacts with PRCD; the interaction promotes PRCD stability. Forms a complex with ASAP1 and ARF4. Forms a complex with ASAP1, RAB11A, Rabin8/RAB3IP, ARF4 and RAB11FIP3; the complex regulates Golgi-to-cilia rhodopsin/RHO transport in photoreceptors. In terms of processing, phosphorylated on some or all of the serine and threonine residues present in the C-terminal region. Post-translationally, contains one covalently linked retinal chromophore. Upon light absorption, the covalently bound 11-cis-retinal is converted to all-trans-retinal. After hydrolysis of the Schiff base and release of the covalently bound all-trans-retinal, active rhodopsin is regenerated by binding of a fresh molecule of 11-cis-retinal.

The protein resides in the membrane. Its subcellular location is the cell projection. It is found in the cilium. The protein localises to the photoreceptor outer segment. Photoreceptor required for image-forming vision at low light intensity. Required for photoreceptor cell viability after birth. Light-induced isomerization of 11-cis to all-trans retinal triggers a conformational change that activates signaling via G-proteins. Subsequent receptor phosphorylation mediates displacement of the bound G-protein alpha subunit by the arrestin SAG and terminates signaling. The protein is Rhodopsin (RHO) of Phoca vitulina (Harbor seal).